The following is a 307-amino-acid chain: Homoserine kinase (307 aa).

86 to 96 (PIARGLGSSAA) is a binding site for ATP.

The protein belongs to the GHMP kinase family. Homoserine kinase subfamily.

The protein resides in the cytoplasm. The enzyme catalyses L-homoserine + ATP = O-phospho-L-homoserine + ADP + H(+). Its pathway is amino-acid biosynthesis; L-threonine biosynthesis; L-threonine from L-aspartate: step 4/5. In terms of biological role, catalyzes the ATP-dependent phosphorylation of L-homoserine to L-homoserine phosphate. The protein is Homoserine kinase of Petrotoga mobilis (strain DSM 10674 / SJ95).